The sequence spans 91 residues: Long neurotoxin LNTX28 (91 aa).

Residues Met1–Thr21 form the signal peptide. 5 disulfides stabilise this stretch: Cys24–Cys41, Cys34–Cys62, Cys47–Cys51, Cys66–Cys77, and Cys78–Cys83.

Belongs to the three-finger toxin family. Long-chain subfamily. Type II alpha-neurotoxin sub-subfamily. Expressed by the venom gland.

Its subcellular location is the secreted. Functionally, binds with high affinity to muscular (alpha-1/CHRNA1) and neuronal (alpha-7/CHRNA7) nicotinic acetylcholine receptor (nAChR) and inhibits acetylcholine from binding to the receptor, thereby impairing neuromuscular and neuronal transmission. The protein is Long neurotoxin LNTX28 of Ophiophagus hannah (King cobra).